A 209-amino-acid polypeptide reads, in one-letter code: High-affinity nitrate transporter 3.2 (209 aa).

A signal peptide spans 1-22 (MAIHTLLFVSLLIFSLIESSSG). The chain crosses the membrane as a helical span at residues 177 to 197 (LDIASTFFSVFSVVSLFVFFV).

This sequence belongs to the NAR2 family. In terms of tissue distribution, bearly detected in roots and shoots.

The protein localises to the cell membrane. In terms of biological role, acts as a dual component transporter with NTR2.1. Required for high-affinity nitrate transport. The sequence is that of High-affinity nitrate transporter 3.2 from Arabidopsis thaliana (Mouse-ear cress).